The primary structure comprises 282 residues: Phosphatidylglycerol--prolipoprotein diacylglyceryl transferase (282 aa).

Helical transmembrane passes span 18 to 38 (LSIK…YFIA), 55 to 75 (VIFY…VIFQ), and 89 to 109 (IWHG…TGII). Arg-137 is a binding site for a 1,2-diacyl-sn-glycero-3-phospho-(1'-sn-glycerol). 2 helical membrane passes run 203-223 (VGET…FVEG) and 235-255 (IRVA…ILIY).

This sequence belongs to the Lgt family.

It localises to the cell membrane. It carries out the reaction L-cysteinyl-[prolipoprotein] + a 1,2-diacyl-sn-glycero-3-phospho-(1'-sn-glycerol) = an S-1,2-diacyl-sn-glyceryl-L-cysteinyl-[prolipoprotein] + sn-glycerol 1-phosphate + H(+). It participates in protein modification; lipoprotein biosynthesis (diacylglyceryl transfer). Catalyzes the transfer of the diacylglyceryl group from phosphatidylglycerol to the sulfhydryl group of the N-terminal cysteine of a prolipoprotein, the first step in the formation of mature lipoproteins. This chain is Phosphatidylglycerol--prolipoprotein diacylglyceryl transferase, found in Staphylococcus haemolyticus (strain JCSC1435).